A 178-amino-acid chain; its full sequence is Relaxin-like protein SQ10 (178 aa).

An N-terminal signal peptide occupies residues 1–20 (MPALLFYLLGFCLLQGQVTG). Cystine bridges form between cysteine 34–cysteine 165, cysteine 46–cysteine 178, and cysteine 164–cysteine 169. Positions 54–150 (ESPSPENPFL…SSASESNTFS (97 aa)) are cleaved as a propeptide — connecting peptide.

This sequence belongs to the insulin family. As to quaternary structure, heterodimer of a B chain and an A chain linked by two disulfide bonds.

It is found in the secreted. The sequence is that of Relaxin-like protein SQ10 from Oryctolagus cuniculus (Rabbit).